Here is a 145-residue protein sequence, read N- to C-terminus: uncharacterized protein (145 aa).

A disordered region spans residues 1–49 (MLSIFKNLLGTSEEDGTTQEANSKDTKGLKEERKRKKRKNKYKIPPGHT). Over residues 22 to 32 (NSKDTKGLKEE) the composition is skewed to basic and acidic residues. Residues 33 to 42 (RKRKKRKNKY) show a composition bias toward basic residues. Position 68 is a phosphoserine (Ser-68). The Cytochrome b5 heme-binding domain maps to 69 to 145 (PISVTAEELA…LKTSFVGYLV (77 aa)). 2 residues coordinate heme: His-104 and His-127.

It belongs to the cytochrome b5 family.

The protein resides in the cytoplasm. This is an uncharacterized protein from Schizosaccharomyces pombe (strain 972 / ATCC 24843) (Fission yeast).